The following is a 504-amino-acid chain: Apoptosis inhibitor 5 (504 aa).

Residues 1–360 form an ARM-like and Heat-like helical repeats region; the sequence is MPTVEELYRN…HQLGRKLPDF (360 aa). N6-acetyllysine is present on lysine 251. A leucine-zipper region spans residues 370–391; it reads LKDFKIRLQYFARGLQVYIRQL. Threonine 399 carries the post-translational modification Phosphothreonine. The segment at 452–504 is disordered; the sequence is GQKRASEDTTSGSPPKKSSAGPKRDARQIYNPPSGKYSSNLGNFNYERSLQGK. The short motif at 454–475 is the Nuclear localization signal element; that stretch reads KRASEDTTSGSPPKKSSAGPKR. Phosphoserine is present on residues serine 462, serine 464, and serine 469. The segment covering 462–472 has biased composition (low complexity); it reads SGSPPKKSSAG. Polar residues predominate over residues 487 to 504; it reads KYSSNLGNFNYERSLQGK.

It belongs to the API5 family. Monomer. Interacts with FGF2 and ACIN1. Acetylation at Lys-251 impairs antiapoptotic function.

Its subcellular location is the nucleus. The protein localises to the cytoplasm. Functionally, antiapoptotic factor that may have a role in protein assembly. Negatively regulates ACIN1. By binding to ACIN1, it suppresses ACIN1 cleavage from CASP3 and ACIN1-mediated DNA fragmentation. Also known to efficiently suppress E2F1-induced apoptosis. This chain is Apoptosis inhibitor 5 (API5), found in Pongo abelii (Sumatran orangutan).